Here is a 131-residue protein sequence, read N- to C-terminus: Global transcriptional regulator Spx (131 aa).

C10 and C13 are oxidised to a cystine.

Belongs to the ArsC family. Spx subfamily. Interacts with the C-terminal domain of the alpha subunit of the RNAP.

It is found in the cytoplasm. Functionally, global transcriptional regulator that plays a key role in stress response and exerts either positive or negative regulation of genes. Acts by interacting with the C-terminal domain of the alpha subunit of the RNA polymerase (RNAP). This interaction can enhance binding of RNAP to the promoter region of target genes and stimulate their transcription, or block interaction of RNAP with activator. In Shouchella clausii (strain KSM-K16) (Alkalihalobacillus clausii), this protein is Global transcriptional regulator Spx.